A 409-amino-acid chain; its full sequence is Odorant receptor 35a (409 aa).

The Cytoplasmic segment spans residues 1 to 35 (MVRYVPRFADGQKVKLAWPLAVFRLNHIFWPLDPS). The helical transmembrane segment at 36–56 (TGKWGRYLDKVLAVAMSLVFM) threads the bilayer. At 57-64 (QHNDAELR) the chain is on the extracellular side. Residues 65–85 (YLRFEASNRNLDAFLTGMPTY) form a helical membrane-spanning segment. Over 86–139 (LILVEAQFRSLHILLHFEKLQKFLEIFYANIYIDPRKEPEMFRKVDGKMIINRL) the chain is Cytoplasmic. Residues 140–160 (VSAMYGAVISLYLIAPVFSII) form a helical membrane-spanning segment. N-linked (GlcNAc...) asparagine glycosylation is present at asparagine 161. The Extracellular segment spans residues 161–177 (NQSKDFLYSMIFPFDSD). The helical transmembrane segment at 178 to 198 (PLYIFVPLLLTNVWVGIVIDT) threads the bilayer. Residues 199-273 (MMFGETNLLC…QQLEAQYTVR (75 aa)) lie on the Cytoplasmic side of the membrane. A helical membrane pass occupies residues 274-294 (VFIMFAFAAGLLCALSFKAYT). At 295 to 302 (NPMANYIY) the chain is on the extracellular side. The helical transmembrane segment at 303–323 (AIWFGAKTVELLSLGQIGSDL) threads the bilayer. Residues 324–379 (AFTTDSLSTMYYLTHWEQILQYSTNPSENLRLLKLINLAIEMNSKPFYVTGLKYFR) lie on the Cytoplasmic side of the membrane. Residues 380-400 (VSLQAGLKILQASFSYFTFLT) traverse the membrane as a helical segment. At 401–409 (SMQRRQMSN) the chain is on the extracellular side.

This sequence belongs to the insect chemoreceptor superfamily. Heteromeric odorant receptor channel (TC 1.A.69) family. Or1a subfamily. Interacts with Orco. Complexes exist early in the endomembrane system in olfactory sensory neurons (OSNs), coupling these complexes to the conserved ciliary trafficking pathway. As to expression, expressed in ac3B olfactory sensory neurons in the antenna.

Its subcellular location is the cell membrane. Functionally, odorant receptor which mediates acceptance or avoidance behavior, depending on its substrates. The odorant receptor repertoire encodes a large collection of odor stimuli that vary widely in identity, intensity, and duration. Forms a complex with Orco to form odorant-sensing units, providing sensitive and prolonged odorant signaling and calcium permeability. Involved in the behavioral responses to esters. Involved in the behavioral responses to butanol, pentanol, hexanol, octanol, propyl acetate, and butyl acetate. The sequence is that of Odorant receptor 35a (Or35a) from Drosophila melanogaster (Fruit fly).